The following is a 704-amino-acid chain: Capsule polysaccharide modification protein LipA (704 aa).

Its subcellular location is the cell inner membrane. Its function is as follows. Involved in the phospholipid modification of the capsular polysaccharide, a strong requirement for its translocation to the cell surface. This Neisseria meningitidis serogroup A / serotype 4A (strain DSM 15465 / Z2491) protein is Capsule polysaccharide modification protein LipA (lipA).